We begin with the raw amino-acid sequence, 486 residues long: N-succinylglutamate 5-semialdehyde dehydrogenase (486 aa).

221-226 is an NAD(+) binding site; that stretch reads GSSATG. Active-site residues include E244 and C278.

It belongs to the aldehyde dehydrogenase family. AstD subfamily.

The catalysed reaction is N-succinyl-L-glutamate 5-semialdehyde + NAD(+) + H2O = N-succinyl-L-glutamate + NADH + 2 H(+). Its pathway is amino-acid degradation; L-arginine degradation via AST pathway; L-glutamate and succinate from L-arginine: step 4/5. Catalyzes the NAD-dependent reduction of succinylglutamate semialdehyde into succinylglutamate. The chain is N-succinylglutamate 5-semialdehyde dehydrogenase from Chromobacterium violaceum (strain ATCC 12472 / DSM 30191 / JCM 1249 / CCUG 213 / NBRC 12614 / NCIMB 9131 / NCTC 9757 / MK).